A 78-amino-acid polypeptide reads, in one-letter code: Large ribosomal subunit protein bL28 (78 aa).

Positions 1-20 are disordered; that stretch reads MSRVCQVTGKGPVTGNNISH.

It belongs to the bacterial ribosomal protein bL28 family.

The protein is Large ribosomal subunit protein bL28 of Pseudomonas putida (strain ATCC 700007 / DSM 6899 / JCM 31910 / BCRC 17059 / LMG 24140 / F1).